The chain runs to 308 residues: UDP-N-acetylenolpyruvoylglucosamine reductase (308 aa).

Residues 32–196 (VGGPAARLYK…ISAKLQLSPG (165 aa)) form the FAD-binding PCMH-type domain. Residue R176 is part of the active site. The active-site Proton donor is the S225. Residue E296 is part of the active site.

Belongs to the MurB family. It depends on FAD as a cofactor.

It localises to the cytoplasm. It catalyses the reaction UDP-N-acetyl-alpha-D-muramate + NADP(+) = UDP-N-acetyl-3-O-(1-carboxyvinyl)-alpha-D-glucosamine + NADPH + H(+). The protein operates within cell wall biogenesis; peptidoglycan biosynthesis. In terms of biological role, cell wall formation. The polypeptide is UDP-N-acetylenolpyruvoylglucosamine reductase (Legionella pneumophila (strain Lens)).